A 104-amino-acid polypeptide reads, in one-letter code: Large ribosomal subunit protein uL24 (104 aa).

The span at 85–96 (IKRELGAKEKAR) shows a compositional bias: basic and acidic residues. Positions 85 to 104 (IKRELGAKEKARADRRKTAK) are disordered.

The protein belongs to the universal ribosomal protein uL24 family. In terms of assembly, part of the 50S ribosomal subunit.

One of two assembly initiator proteins, it binds directly to the 5'-end of the 23S rRNA, where it nucleates assembly of the 50S subunit. Its function is as follows. One of the proteins that surrounds the polypeptide exit tunnel on the outside of the subunit. The protein is Large ribosomal subunit protein uL24 of Anaeromyxobacter sp. (strain Fw109-5).